A 195-amino-acid chain; its full sequence is ATP-dependent Clp protease proteolytic subunit 2 (195 aa).

Ser-95 serves as the catalytic Nucleophile. Residue His-120 is part of the active site.

Belongs to the peptidase S14 family. In terms of assembly, fourteen ClpP subunits assemble into 2 heptameric rings which stack back to back to give a disk-like structure with a central cavity, resembling the structure of eukaryotic proteasomes.

It localises to the cytoplasm. It carries out the reaction Hydrolysis of proteins to small peptides in the presence of ATP and magnesium. alpha-casein is the usual test substrate. In the absence of ATP, only oligopeptides shorter than five residues are hydrolyzed (such as succinyl-Leu-Tyr-|-NHMec, and Leu-Tyr-Leu-|-Tyr-Trp, in which cleavage of the -Tyr-|-Leu- and -Tyr-|-Trp bonds also occurs).. Cleaves peptides in various proteins in a process that requires ATP hydrolysis. Has a chymotrypsin-like activity. Plays a major role in the degradation of misfolded proteins. This chain is ATP-dependent Clp protease proteolytic subunit 2, found in Methylococcus capsulatus (strain ATCC 33009 / NCIMB 11132 / Bath).